A 426-amino-acid polypeptide reads, in one-letter code: Serine hydroxymethyltransferase (426 aa).

(6S)-5,6,7,8-tetrahydrofolate is bound by residues Leu118 and Gly122–Leu124. Lys227 is modified (N6-(pyridoxal phosphate)lysine).

This sequence belongs to the SHMT family. As to quaternary structure, homodimer. The cofactor is pyridoxal 5'-phosphate.

Its subcellular location is the cytoplasm. The catalysed reaction is (6R)-5,10-methylene-5,6,7,8-tetrahydrofolate + glycine + H2O = (6S)-5,6,7,8-tetrahydrofolate + L-serine. It participates in one-carbon metabolism; tetrahydrofolate interconversion. The protein operates within amino-acid biosynthesis; glycine biosynthesis; glycine from L-serine: step 1/1. In terms of biological role, catalyzes the reversible interconversion of serine and glycine with tetrahydrofolate (THF) serving as the one-carbon carrier. This reaction serves as the major source of one-carbon groups required for the biosynthesis of purines, thymidylate, methionine, and other important biomolecules. Also exhibits THF-independent aldolase activity toward beta-hydroxyamino acids, producing glycine and aldehydes, via a retro-aldol mechanism. The protein is Serine hydroxymethyltransferase of Mycobacterium avium (strain 104).